The following is a 337-amino-acid chain: tRNA N6-adenosine threonylcarbamoyltransferase (337 aa).

Fe cation is bound by residues His-111 and His-115. Substrate-binding positions include 134 to 138, Asp-167, Gly-180, and Asn-272; that span reads LVSGG. Asp-300 provides a ligand contact to Fe cation.

Belongs to the KAE1 / TsaD family. Fe(2+) serves as cofactor.

The protein localises to the cytoplasm. It carries out the reaction L-threonylcarbamoyladenylate + adenosine(37) in tRNA = N(6)-L-threonylcarbamoyladenosine(37) in tRNA + AMP + H(+). Functionally, required for the formation of a threonylcarbamoyl group on adenosine at position 37 (t(6)A37) in tRNAs that read codons beginning with adenine. Is involved in the transfer of the threonylcarbamoyl moiety of threonylcarbamoyl-AMP (TC-AMP) to the N6 group of A37, together with TsaE and TsaB. TsaD likely plays a direct catalytic role in this reaction. The sequence is that of tRNA N6-adenosine threonylcarbamoyltransferase from Nitrosomonas europaea (strain ATCC 19718 / CIP 103999 / KCTC 2705 / NBRC 14298).